The chain runs to 597 residues: UvrABC system protein C (597 aa).

The GIY-YIG domain occupies 14–91 (KKPGCYLWKD…INQYQPRFNL (78 aa)).

This sequence belongs to the UvrC family. Interacts with UvrB in an incision complex.

It localises to the cytoplasm. The UvrABC repair system catalyzes the recognition and processing of DNA lesions. UvrC both incises the 5' and 3' sides of the lesion. The N-terminal half is responsible for the 3' incision and the C-terminal half is responsible for the 5' incision. The chain is UvrABC system protein C from Mycoplasma genitalium (strain ATCC 33530 / DSM 19775 / NCTC 10195 / G37) (Mycoplasmoides genitalium).